The sequence spans 423 residues: D-tagatose-1,6-bisphosphate aldolase subunit GatZ (423 aa).

It belongs to the GatZ/KbaZ family. GatZ subfamily. Forms a complex with GatY.

The protein operates within carbohydrate metabolism; D-tagatose 6-phosphate degradation; D-glyceraldehyde 3-phosphate and glycerone phosphate from D-tagatose 6-phosphate: step 2/2. Its function is as follows. Component of the tagatose-1,6-bisphosphate aldolase GatYZ that is required for full activity and stability of the Y subunit. Could have a chaperone-like function for the proper and stable folding of GatY. When expressed alone, GatZ does not show any aldolase activity. Is involved in the catabolism of galactitol. The chain is D-tagatose-1,6-bisphosphate aldolase subunit GatZ from Salmonella heidelberg (strain SL476).